A 269-amino-acid chain; its full sequence is Undecaprenyl-diphosphatase (269 aa).

Transmembrane regions (helical) follow at residues 40–59 (GITF…ALYF), 87–107 (WYII…EEPI), 116–136 (AIIA…DTLG), 160–180 (ALLP…FLGF), 188–208 (FSFL…VGHL), 220–240 (PLLI…ALLL), and 247–267 (SLYP…LFIF).

The protein belongs to the UppP family.

It is found in the cell inner membrane. It catalyses the reaction di-trans,octa-cis-undecaprenyl diphosphate + H2O = di-trans,octa-cis-undecaprenyl phosphate + phosphate + H(+). Functionally, catalyzes the dephosphorylation of undecaprenyl diphosphate (UPP). Confers resistance to bacitracin. This chain is Undecaprenyl-diphosphatase, found in Geobacter metallireducens (strain ATCC 53774 / DSM 7210 / GS-15).